Reading from the N-terminus, the 393-residue chain is Chalcone synthase DIII (393 aa).

The active site involves C164.

Belongs to the thiolase-like superfamily. Chalcone/stilbene synthases family.

It catalyses the reaction (E)-4-coumaroyl-CoA + 3 malonyl-CoA + 3 H(+) = 2',4,4',6'-tetrahydroxychalcone + 3 CO2 + 4 CoA. Its pathway is secondary metabolite biosynthesis; flavonoid biosynthesis. The primary product of this enzyme is 4,2',4',6'-tetrahydroxychalcone (also termed naringenin-chalcone or chalcone) which can under specific conditions spontaneously isomerize into naringenin. The sequence is that of Chalcone synthase DIII (CHS-DIII) from Ipomoea batatas (Sweet potato).